A 138-amino-acid chain; its full sequence is Holo-[acyl-carrier-protein] synthase (138 aa).

The Mg(2+) site is built by aspartate 8 and glutamate 54.

Belongs to the P-Pant transferase superfamily. AcpS family. Mg(2+) serves as cofactor.

It localises to the cytoplasm. It catalyses the reaction apo-[ACP] + CoA = holo-[ACP] + adenosine 3',5'-bisphosphate + H(+). In terms of biological role, transfers the 4'-phosphopantetheine moiety from coenzyme A to a Ser of acyl-carrier-protein. The sequence is that of Holo-[acyl-carrier-protein] synthase from Roseiflexus sp. (strain RS-1).